The chain runs to 230 residues: MMITLDHVTKQYKSSARPALDDINVKIDKGEFVFLIGPSGSGKSTFMRLLLAAETPTSGDVRVSKFHVNKLRGRHVPKLRQVIGCVFQDFRLLQQKTVYDNVAFALEVIGKRTDAINRVVPEVLETVGLSGKANRLPDELSGGEQQRVAIARAFVNRPLVLLADEPTGNLDPETSRDIMDLLERINRTGTTVLMATHDHHIVDSMRQRVVELSLGRLVRDEQRGVYGMDR.

The ABC transporter domain occupies isoleucine 3–methionine 228. Glycine 37–serine 44 is an ATP binding site.

The protein belongs to the ABC transporter superfamily. As to quaternary structure, homodimer. Forms a membrane-associated complex with FtsX.

The protein resides in the cell membrane. Part of the ABC transporter FtsEX involved in cellular division. Has ATPase activity. The sequence is that of Cell division ATP-binding protein FtsE from Mycobacterium tuberculosis (strain ATCC 25618 / H37Rv).